A 344-amino-acid polypeptide reads, in one-letter code: Anthranilate phosphoribosyltransferase (344 aa).

5-phospho-alpha-D-ribose 1-diphosphate is bound by residues glycine 80, 83–84, threonine 88, 90–93, 108–116, and serine 120; these read GD, NVST, and KHGNRSVSS. An anthranilate-binding site is contributed by glycine 80. Serine 92 provides a ligand contact to Mg(2+). Asparagine 111 provides a ligand contact to anthranilate. Anthranilate is bound at residue arginine 166. Mg(2+)-binding residues include aspartate 225 and glutamate 226.

This sequence belongs to the anthranilate phosphoribosyltransferase family. As to quaternary structure, homodimer. The cofactor is Mg(2+).

It catalyses the reaction N-(5-phospho-beta-D-ribosyl)anthranilate + diphosphate = 5-phospho-alpha-D-ribose 1-diphosphate + anthranilate. The protein operates within amino-acid biosynthesis; L-tryptophan biosynthesis; L-tryptophan from chorismate: step 2/5. In terms of biological role, catalyzes the transfer of the phosphoribosyl group of 5-phosphorylribose-1-pyrophosphate (PRPP) to anthranilate to yield N-(5'-phosphoribosyl)-anthranilate (PRA). The chain is Anthranilate phosphoribosyltransferase from Legionella pneumophila (strain Paris).